The chain runs to 298 residues: Quinolinate synthase (298 aa).

Residues H19 and S36 each contribute to the iminosuccinate site. C81 lines the [4Fe-4S] cluster pocket. Iminosuccinate-binding positions include Y107–N109 and S124. C168 contributes to the [4Fe-4S] cluster binding site. Residues H193–E195 and T210 each bind iminosuccinate. Residue C254 coordinates [4Fe-4S] cluster.

The protein belongs to the quinolinate synthase family. Type 2 subfamily. It depends on [4Fe-4S] cluster as a cofactor.

The protein resides in the cytoplasm. The catalysed reaction is iminosuccinate + dihydroxyacetone phosphate = quinolinate + phosphate + 2 H2O + H(+). The protein operates within cofactor biosynthesis; NAD(+) biosynthesis; quinolinate from iminoaspartate: step 1/1. In terms of biological role, catalyzes the condensation of iminoaspartate with dihydroxyacetone phosphate to form quinolinate. The chain is Quinolinate synthase from Thermotoga petrophila (strain ATCC BAA-488 / DSM 13995 / JCM 10881 / RKU-1).